Reading from the N-terminus, the 434-residue chain is ATP-sensitive inward rectifier potassium channel 14 (434 aa).

At 1-81 (MGLARALRRL…LSDLFTTCVD (81 aa)) the chain is on the cytoplasmic side. Cys-79 is subject to S-nitrosocysteine. The helical transmembrane segment at 82–108 (VRWRWMCLLFSCSFLASWLLFGLTFWL) threads the bilayer. The Extracellular segment spans residues 109–131 (IASLHGDLAAPPPPAPCFSQVAS). The segment at residues 132-148 (FLAAFLFALETQTSIGY) is an intramembrane region (helical; Pore-forming). Positions 145–150 (SIGYGV) match the Selectivity filter motif. Residues 149–157 (GVRSVTEEC) are Extracellular-facing. The helical transmembrane segment at 158 to 185 (PAAVAAVVLQCIAGCVLDAFVVGAVMAK) threads the bilayer. The Cytoplasmic segment spans residues 186 to 434 (MAKPKKRNET…TPTLALTLPP (249 aa)). The tract at residues 398-434 (QEEDEEEDTKEGTSAETPERAASPQALTPTLALTLPP) is disordered. Basic and acidic residues predominate over residues 407-416 (KEGTSAETPE). Low complexity predominate over residues 418–434 (AASPQALTPTLALTLPP).

The protein belongs to the inward rectifier-type potassium channel (TC 1.A.2.1) family. KCNJ14 subfamily.

The protein localises to the membrane. It carries out the reaction K(+)(in) = K(+)(out). Channel activity is regulated by variations of cytosolic pH; channels are activated by alkaline and inhibited by acidic pH values. Inhibited by Ba(2+) and Cs(+) in a voltage-dependent manner; sensitivity to those inhibitors is lower than in other Kir channels. Inward rectifier potassium channels are characterized by a greater tendency to allow potassium to flow into the cell rather than out of it. Their voltage dependence is regulated by the concentration of extracellular potassium; as external potassium is raised, the voltage range of the channel opening shifts to more positive voltages. This Mus musculus (Mouse) protein is ATP-sensitive inward rectifier potassium channel 14 (Kcnj14).